Consider the following 957-residue polypeptide: Protein CRT10 (957 aa).

The disordered stretch occupies residues 695 to 719 (NSTEEDDVNSDPENEESGSSLTSFQ). Residues 697–710 (TEEDDVNSDPENEE) are compositionally biased toward acidic residues. S704 carries the post-translational modification Phosphoserine.

Component of a cullin-RING ligase (CRL) composed of 4 subunits: the RING protein HRT1, the cullin RTT101, a linker protein MMS1, and the substrate receptor CRT10. Interacts with MMS1.

Functionally, substrate targeting component of a cullin-RING-based E3 ubiquitin-protein ligase complex RTT101(MMS1-CRT10). RTT101(MMS1-CRT10) may regulate nucleotide synthesis through transcriptional regulation of RNR genes encoding ribonucleotide reductases. The chain is Protein CRT10 (CRT10) from Saccharomyces cerevisiae (strain ATCC 204508 / S288c) (Baker's yeast).